Consider the following 62-residue polypeptide: Endoregulin (62 aa).

A helical membrane pass occupies residues 25 to 45; sequence LAVIILFITAVLLLILFAIVF.

As to quaternary structure, homooligomer. Can also form heterooligomers with other sarcoplasmic/endoplasmic reticulum calcium ATPase (SERCA) regulators ARLN, PLN, SLN and STRIT1/DWORF. Monomer. Interacts as a monomer with ATP2A2/SERCA2; the interaction results in inhibition of ATP2A2 Ca(2+) affinity.

Its subcellular location is the endoplasmic reticulum membrane. In terms of biological role, inhibits the activity of the calcium ATPases ATP2A2/SERCA2 and ATP2A3/SERCA3 by decreasing their apparent affinity for Ca(2+). This is Endoregulin from Homo sapiens (Human).